The chain runs to 379 residues: Presenilin-associated rhomboid-like protein, mitochondrial (379 aa).

The transit peptide at Met1–Gly52 directs the protein to the mitochondrion. At Phe53–Pro101 the chain is on the mitochondrial matrix side. Ser65 bears the Phosphoserine mark. Thr69 carries the post-translational modification Phosphothreonine. Residue Ser70 is modified to Phosphoserine. Residues Leu102–Tyr121 traverse the membrane as a helical segment. The Mitochondrial intermembrane portion of the chain corresponds to Glu122 to Arg167. Residues Thr168–Ser187 traverse the membrane as a helical segment. At Leu188 to Ser207 the chain is on the mitochondrial matrix side. A helical transmembrane segment spans residues Pro208–Trp230. At Ser231 to Gln244 the chain is on the mitochondrial intermembrane side. The chain crosses the membrane as a helical span at residues Phe245 to Val262. The Mitochondrial matrix segment spans residues Gly263–Ser273. The helical transmembrane segment at Leu274–Pro292 threads the bilayer. Ser277 functions as the Nucleophile in the catalytic mechanism. The Mitochondrial intermembrane portion of the chain corresponds to Glu293–Arg295. Residues Leu296–Met318 form a helical membrane-spanning segment. Residues Asp319 to His332 are Mitochondrial matrix-facing. The helical transmembrane segment at Ala333–Trp354 threads the bilayer. His335 is an active-site residue. Residues Lys355–Lys379 lie on the Mitochondrial intermembrane side of the membrane.

This sequence belongs to the peptidase S54 family. As to quaternary structure, interacts with PSEN1 and PSEN2. Binds OPA1. P-beta is proteolytically processed (beta-cleavage) in a PARL-dependent manner.

Its subcellular location is the mitochondrion inner membrane. It localises to the nucleus. It catalyses the reaction Cleaves type-1 transmembrane domains using a catalytic dyad composed of serine and histidine that are contributed by different transmembrane domains.. Functionally, required for the control of apoptosis during postnatal growth. Essential for proteolytic processing of an antiapoptotic form of OPA1 which prevents the release of mitochondrial cytochrome c in response to intrinsic apoptotic signals. Required for the maturation of PINK1 into its 52kDa mature form after its cleavage by mitochondrial-processing peptidase (MPP). Promotes cleavage of serine/threonine-protein phosphatase PGAM5 in damaged mitochondria in response to loss of mitochondrial membrane potential. Mediates differential cleavage of PINK1 and PGAM5 depending on the health status of mitochondria, disassociating from PINK1 and associating with PGAM5 in response to mitochondrial membrane potential loss. Required for processing of CLPB into a form with higher protein disaggregase activity by removing an autoinhibitory N-terminal peptide. Promotes processing of DIABLO/SMAC in the mitochondrion which is required for DIABLO apoptotic activity. Also required for cleavage of STARD7 and TTC19. Promotes changes in mitochondria morphology regulated by phosphorylation of P-beta domain. The sequence is that of Presenilin-associated rhomboid-like protein, mitochondrial (PARL) from Pongo abelii (Sumatran orangutan).